The sequence spans 385 residues: Histidinol-phosphate aminotransferase (385 aa).

Lysine 230 carries the post-translational modification N6-(pyridoxal phosphate)lysine.

It belongs to the class-II pyridoxal-phosphate-dependent aminotransferase family. Pyridoxal 5'-phosphate is required as a cofactor.

The enzyme catalyses L-histidinol phosphate + 2-oxoglutarate = 3-(imidazol-4-yl)-2-oxopropyl phosphate + L-glutamate. The protein operates within amino-acid biosynthesis; L-histidine biosynthesis; L-histidine from 5-phospho-alpha-D-ribose 1-diphosphate: step 7/9. The protein is Histidinol-phosphate aminotransferase of Saccharomyces cerevisiae (strain ATCC 204508 / S288c) (Baker's yeast).